Reading from the N-terminus, the 304-residue chain is tRNA dimethylallyltransferase (304 aa).

ATP is bound at residue Gly16–Ser23. Thr18 to Ser23 lines the substrate pocket. Interaction with substrate tRNA stretches follow at residues Asp41–Gln44 and Gln165–Arg169.

Belongs to the IPP transferase family. As to quaternary structure, monomer. Mg(2+) serves as cofactor.

It catalyses the reaction adenosine(37) in tRNA + dimethylallyl diphosphate = N(6)-dimethylallyladenosine(37) in tRNA + diphosphate. Functionally, catalyzes the transfer of a dimethylallyl group onto the adenine at position 37 in tRNAs that read codons beginning with uridine, leading to the formation of N6-(dimethylallyl)adenosine (i(6)A). In Allorhizobium ampelinum (strain ATCC BAA-846 / DSM 112012 / S4) (Agrobacterium vitis (strain S4)), this protein is tRNA dimethylallyltransferase.